Reading from the N-terminus, the 441-residue chain is Putative serine/threonine-protein kinase F31E3.2 (441 aa).

Over residues 1–16 the composition is skewed to basic residues; that stretch reads MGNVATRKRPGCHHHI. The disordered stretch occupies residues 1 to 41; that stretch reads MGNVATRKRPGCHHHIGRNEENLDDDEDGPAKKRLRIGEPQ. In terms of domain architecture, Protein kinase spans 126–381; sequence FVLERQLGRG…FTVLHAHPFF (256 aa). Residues 132 to 140 and lysine 156 contribute to the ATP site; that span reads LGRGSFGVV. Aspartate 253 acts as the Proton acceptor in catalysis.

The protein belongs to the protein kinase superfamily. Ser/Thr protein kinase family.

It carries out the reaction L-seryl-[protein] + ATP = O-phospho-L-seryl-[protein] + ADP + H(+). It catalyses the reaction L-threonyl-[protein] + ATP = O-phospho-L-threonyl-[protein] + ADP + H(+). This is Putative serine/threonine-protein kinase F31E3.2 from Caenorhabditis elegans.